Consider the following 286-residue polypeptide: Pantothenate synthetase (286 aa).

Residue 31–38 coordinates ATP; it reads MGALHDGH. Residue histidine 38 is the Proton donor of the active site. Residue glutamine 62 participates in (R)-pantoate binding. Glutamine 62 is a beta-alanine binding site. Residue 148–151 participates in ATP binding; sequence GKKD. Glutamine 154 lines the (R)-pantoate pocket. Residues valine 177 and 185-188 each bind ATP; that span reads KSSR.

Belongs to the pantothenate synthetase family. In terms of assembly, homodimer.

Its subcellular location is the cytoplasm. The enzyme catalyses (R)-pantoate + beta-alanine + ATP = (R)-pantothenate + AMP + diphosphate + H(+). It functions in the pathway cofactor biosynthesis; (R)-pantothenate biosynthesis; (R)-pantothenate from (R)-pantoate and beta-alanine: step 1/1. Its function is as follows. Catalyzes the condensation of pantoate with beta-alanine in an ATP-dependent reaction via a pantoyl-adenylate intermediate. In Staphylococcus epidermidis (strain ATCC 35984 / DSM 28319 / BCRC 17069 / CCUG 31568 / BM 3577 / RP62A), this protein is Pantothenate synthetase.